A 590-amino-acid polypeptide reads, in one-letter code: Probable lysine-specific demethylase 4B (590 aa).

The region spanning 9–51 (IKVFRPTWEEFKDFPKYVAYMESQGAHKAGLAKVVPPPEWVPR) is the JmjN domain. Tyr-130 contacts 2-oxoglutarate. The JmjC domain occupies 140-306 (DTDQDSWNIN…YGKRAVQCTC (167 aa)). 2 residues coordinate Fe cation: His-186 and Glu-188. The 2-oxoglutarate site is built by Asn-196 and Lys-204. Zn(2+) is bound by residues Cys-232 and His-238. Lys-239 is a 2-oxoglutarate binding site. His-274 serves as a coordination point for Fe cation. 2 residues coordinate Zn(2+): Cys-304 and Cys-306. Disordered stretches follow at residues 372–395 (PTKAKSFKERNPDLDLDEIQQNPN) and 417–590 (ATDE…TASP). The span at 445 to 458 (EYIDDGTEDDDEEE) shows a compositional bias: acidic residues. Positions 480–494 (SKRKTNSRNNRGRSP) are enriched in basic residues. Low complexity-rich tracts occupy residues 502–513 (ISPASSTSSTSR) and 537–571 (TTSPAVSSAATAVKTPTSAVVAGTTSIATTTTPPA).

The protein belongs to the JHDM3 histone demethylase family. Requires Fe(2+) as cofactor.

The protein resides in the nucleus. It catalyses the reaction N(6),N(6),N(6)-trimethyl-L-lysyl(9)-[histone H3] + 2 2-oxoglutarate + 2 O2 = N(6)-methyl-L-lysyl(9)-[histone H3] + 2 formaldehyde + 2 succinate + 2 CO2. Its function is as follows. Probable histone demethylase that specifically demethylates 'Lys-9' and 'Lys-36' residues of histone H3, thereby playing a central role in histone code. Demethylation of Lys residue generates formaldehyde and succinate. This Drosophila melanogaster (Fruit fly) protein is Probable lysine-specific demethylase 4B (Kdm4B).